A 139-amino-acid chain; its full sequence is Translation initiation factor 2 subunit beta (139 aa).

The protein belongs to the eIF-2-beta/eIF-5 family. Heterotrimer composed of an alpha, a beta and a gamma chain.

Functionally, eIF-2 functions in the early steps of protein synthesis by forming a ternary complex with GTP and initiator tRNA. The protein is Translation initiation factor 2 subunit beta of Nanoarchaeum equitans (strain Kin4-M).